Reading from the N-terminus, the 460-residue chain is Phosphoenolpyruvate carboxylase (460 aa).

This sequence belongs to the PEPCase type 2 family. As to quaternary structure, homotetramer. Requires Mg(2+) as cofactor.

It carries out the reaction oxaloacetate + phosphate = phosphoenolpyruvate + hydrogencarbonate. Catalyzes the irreversible beta-carboxylation of phosphoenolpyruvate (PEP) to form oxaloacetate (OAA), a four-carbon dicarboxylic acid source for the tricarboxylic acid cycle. This is Phosphoenolpyruvate carboxylase from Pyrobaculum aerophilum (strain ATCC 51768 / DSM 7523 / JCM 9630 / CIP 104966 / NBRC 100827 / IM2).